We begin with the raw amino-acid sequence, 227 residues long: tRNA (guanine-N(1)-)-methyltransferase (227 aa).

Residues Gly110 and 129–134 (IGDYVL) each bind S-adenosyl-L-methionine.

The protein belongs to the RNA methyltransferase TrmD family. As to quaternary structure, homodimer.

Its subcellular location is the cytoplasm. It catalyses the reaction guanosine(37) in tRNA + S-adenosyl-L-methionine = N(1)-methylguanosine(37) in tRNA + S-adenosyl-L-homocysteine + H(+). In terms of biological role, specifically methylates guanosine-37 in various tRNAs. The sequence is that of tRNA (guanine-N(1)-)-methyltransferase from Mycoplasmopsis synoviae (strain 53) (Mycoplasma synoviae).